Here is a 361-residue protein sequence, read N- to C-terminus: Peptide chain release factor 1 (361 aa).

At Gln235 the chain carries N5-methylglutamine. The segment at 288 to 307 is disordered; the sequence is AARSADRKDQVGSGDRSERI.

It belongs to the prokaryotic/mitochondrial release factor family. In terms of processing, methylated by PrmC. Methylation increases the termination efficiency of RF1.

It is found in the cytoplasm. Its function is as follows. Peptide chain release factor 1 directs the termination of translation in response to the peptide chain termination codons UAG and UAA. This chain is Peptide chain release factor 1, found in Nitrobacter hamburgensis (strain DSM 10229 / NCIMB 13809 / X14).